The primary structure comprises 100 residues: Large ribosomal subunit protein uL23 (100 aa).

It belongs to the universal ribosomal protein uL23 family. Part of the 50S ribosomal subunit. Contacts protein L29, and trigger factor when it is bound to the ribosome.

In terms of biological role, one of the early assembly proteins it binds 23S rRNA. One of the proteins that surrounds the polypeptide exit tunnel on the outside of the ribosome. Forms the main docking site for trigger factor binding to the ribosome. The sequence is that of Large ribosomal subunit protein uL23 from Prochlorococcus marinus (strain AS9601).